The following is a 2080-amino-acid chain: Fatty acid synthase beta subunit TOXC (2080 aa).

The Starter acyltransferase (SAT) domain maps to G170–K397. The active-site For acetyltransferase activity is S276. Residues S585–D830 are enoyl reductase (ER) domain. Residues G1155–L1644 form a dehydratase (DH) domain region. A MaoC-like domain is found at S1544–A1662. The 365-residue stretch at T1682–S2046 folds into the Malonyl-CoA:ACP transacylase (MAT) domain. The malonyl/palmitoyl transferase (MT/PT) domain stretch occupies residues Y1683–S2046. S1828 (for malonyltransferase activity) is an active-site residue.

The protein belongs to the fungal fatty acid synthetase subunit beta family.

It catalyses the reaction acetyl-CoA + n malonyl-CoA + 2n NADPH + 4n H(+) = a long-chain-acyl-CoA + n CoA + n CO2 + 2n NADP(+).. The enzyme catalyses holo-[ACP] + acetyl-CoA = acetyl-[ACP] + CoA. The catalysed reaction is holo-[ACP] + malonyl-CoA = malonyl-[ACP] + CoA. It carries out the reaction a (3R)-hydroxyacyl-[ACP] = a (2E)-enoyl-[ACP] + H2O. It catalyses the reaction a 2,3-saturated acyl-[ACP] + NAD(+) = a (2E)-enoyl-[ACP] + NADH + H(+). The enzyme catalyses (9Z)-octadecenoyl-[ACP] + H2O = (9Z)-octadecenoate + holo-[ACP] + H(+). It functions in the pathway mycotoxin biosynthesis; HC-toxin biosynthesis. Functionally, fatty acid synthase beta subunit, part of the diffuse TOX2 gene cluster that mediates the biosynthesis of the HC-toxin, cyclic tetrapeptide of structure cyclo(D-Pro-L-Ala-D-Ala-L-Aeo), where Aeo stands for 2-amino-9,10-epoxi-8-oxodecanoic acid. HC-toxin is a determinant of specificity and virulence in the interaction between the producing fungus and its host, maize. TOXC contribute to the synthesis of the decanoic backbone of 2-amino-9,10-epoxi-8-oxodecanoic acid, an essential precursor for the production of the major forms of HC-toxin by the non-ribosomal peptide synthetase HTS1. The sequence is that of Fatty acid synthase beta subunit TOXC from Cochliobolus carbonum (Maize leaf spot fungus).